The primary structure comprises 284 residues: GPN-loop GTPase 3 (284 aa).

13–18 (GSGKST) is a GTP binding site. The Gly-Pro-Asn (GPN)-loop; involved in dimer interface motif lies at 72–74 (GPN). 174-177 (TKMD) lines the GTP pocket. The interval 262–284 (EPREHEEESSSMFDEYFQERQNE) is disordered.

The protein belongs to the GPN-loop GTPase family. Heterodimer with GPN1. Binds to RNA polymerase II (RNAPII). Interacts directly with subunits RPB4 and RPB7 and the CTD of RPB1.

Functionally, small GTPase required for proper localization of RNA polymerase II (RNAPII). May act at an RNAP assembly step prior to nuclear import. This chain is GPN-loop GTPase 3, found in Mus musculus (Mouse).